Reading from the N-terminus, the 317-residue chain is Fruit protein pKIWI502 (317 aa).

Residues 1–29 form a disordered region; that stretch reads MSITLSRPSLSRPSLSRHPSLTLHSSLSH. An FAD-binding FR-type domain is found at 71-182; sequence YIWTPVPISR…TQIIGRGFDI (112 aa).

The protein is Fruit protein pKIWI502 of Actinidia deliciosa (Kiwi).